A 184-amino-acid chain; its full sequence is ATP-dependent protease subunit HslV (184 aa).

Residue T12 is part of the active site. Residues A166, C169, and T172 each contribute to the Na(+) site.

Belongs to the peptidase T1B family. HslV subfamily. A double ring-shaped homohexamer of HslV is capped on each side by a ring-shaped HslU homohexamer. The assembly of the HslU/HslV complex is dependent on binding of ATP.

Its subcellular location is the cytoplasm. It carries out the reaction ATP-dependent cleavage of peptide bonds with broad specificity.. Allosterically activated by HslU binding. In terms of biological role, protease subunit of a proteasome-like degradation complex believed to be a general protein degrading machinery. This Brucella abortus (strain S19) protein is ATP-dependent protease subunit HslV.